A 130-amino-acid polypeptide reads, in one-letter code: MIQIDPRSSTPIYEQIIQQMKELCLKGIMKPGDKLPSVRELATIIIANPNTVSKAYKELEREGIIETLRGRGTYISENAKTTLVEGKMTMIKEQLKQLIIDAHYAGVELEKLHEWIKEISADVKGGKKND.

In terms of domain architecture, HTH gntR-type spans 10–78 (TPIYEQIIQQ…RGRGTYISEN (69 aa)). Residues 38–57 (VRELATIIIANPNTVSKAYK) constitute a DNA-binding region (H-T-H motif).

Functionally, negatively regulates ABC transporter complex ytrBCDEF that plays a role in acetoin utilization during stationary phase and sporulation. This Bacillus subtilis (strain 168) protein is HTH-type transcriptional repressor YtrA (ytrA).